A 300-amino-acid chain; its full sequence is Glycine--tRNA ligase alpha subunit (300 aa).

It belongs to the class-II aminoacyl-tRNA synthetase family. Tetramer of two alpha and two beta subunits.

It is found in the cytoplasm. The enzyme catalyses tRNA(Gly) + glycine + ATP = glycyl-tRNA(Gly) + AMP + diphosphate. The protein is Glycine--tRNA ligase alpha subunit (glyQ) of Buchnera aphidicola subsp. Baizongia pistaciae (strain Bp).